The chain runs to 405 residues: Nicotinate phosphoribosyltransferase (405 aa).

His230 carries the phosphohistidine; by autocatalysis modification.

This sequence belongs to the NAPRTase family. Post-translationally, transiently phosphorylated on a His residue during the reaction cycle. Phosphorylation strongly increases the affinity for substrates and increases the rate of nicotinate D-ribonucleotide production. Dephosphorylation regenerates the low-affinity form of the enzyme, leading to product release.

The catalysed reaction is nicotinate + 5-phospho-alpha-D-ribose 1-diphosphate + ATP + H2O = nicotinate beta-D-ribonucleotide + ADP + phosphate + diphosphate. It functions in the pathway cofactor biosynthesis; NAD(+) biosynthesis; nicotinate D-ribonucleotide from nicotinate: step 1/1. Functionally, catalyzes the synthesis of beta-nicotinate D-ribonucleotide from nicotinate and 5-phospho-D-ribose 1-phosphate at the expense of ATP. The polypeptide is Nicotinate phosphoribosyltransferase (Bordetella pertussis (strain Tohama I / ATCC BAA-589 / NCTC 13251)).